A 50-amino-acid polypeptide reads, in one-letter code: Large ribosomal subunit protein bL33 (50 aa).

Belongs to the bacterial ribosomal protein bL33 family.

This is Large ribosomal subunit protein bL33 from Sulfurimonas denitrificans (strain ATCC 33889 / DSM 1251) (Thiomicrospira denitrificans (strain ATCC 33889 / DSM 1251)).